The chain runs to 100 residues: NADH-quinone oxidoreductase subunit K (100 aa).

The next 3 membrane-spanning stretches (helical) occupy residues 1–21 (MIGLNHYLIVSGLLFCIGLAG), 28–48 (ILLLFFSTEIMLNAINIGFIA), and 64–84 (FIIAIAASEVAIGLGLVILWF).

Belongs to the complex I subunit 4L family. NDH-1 is composed of 14 different subunits. Subunits NuoA, H, J, K, L, M, N constitute the membrane sector of the complex.

It localises to the cell inner membrane. It carries out the reaction a quinone + NADH + 5 H(+)(in) = a quinol + NAD(+) + 4 H(+)(out). NDH-1 shuttles electrons from NADH, via FMN and iron-sulfur (Fe-S) centers, to quinones in the respiratory chain. The immediate electron acceptor for the enzyme in this species is believed to be ubiquinone. Couples the redox reaction to proton translocation (for every two electrons transferred, four hydrogen ions are translocated across the cytoplasmic membrane), and thus conserves the redox energy in a proton gradient. This Helicobacter pylori (strain G27) protein is NADH-quinone oxidoreductase subunit K.